The primary structure comprises 334 residues: Delta(1)-pyrroline-2-carboxylate/Delta(1)-piperideine-2-carboxylate reductase (334 aa).

Catalysis depends on serine 44, which acts as the Charge relay system. The Proton donor role is filled by histidine 45. Arginine 49 lines the substrate pocket. An NADP(+)-binding site is contributed by 117–121 (HFSAL). Threonine 157 is a binding site for substrate. 175-177 (DFA) contributes to the NADP(+) binding site. Residue 183–184 (RG) coordinates substrate. The active-site Charge relay system is glutamate 185. Residues 226 to 227 (HK) and 301 to 307 (RLPSQRR) each bind NADP(+).

This sequence belongs to the LDH2/MDH2 oxidoreductase family. As to quaternary structure, homodimer.

It carries out the reaction L-pipecolate + NADP(+) = Delta(1)-piperideine-2-carboxylate + NADPH + H(+). The enzyme catalyses L-proline + NADP(+) = 1-pyrroline-2-carboxylate + NADPH + H(+). It catalyses the reaction cis-4-hydroxy-L-proline + NADP(+) = Delta(1)-pyrroline-(4S)-hydroxy-2-carboxylate + NADPH + 2 H(+). Its function is as follows. Catalyzes the reduction of both Delta(1)-pyrroline-2-carboxylate (Pyr2C) and Delta(1)-piperideine-2-carboxylate (Pip2C) to L-proline and L-pipecolate, respectively, using NADPH as the electron donor. Cannot use NADH instead of NADPH. Is likely involved in a degradation pathway that converts trans-3-hydroxy-L-proline (t3LHyp) to L-proline, which would allow P.aeruginosa to grow on t3LHyp as a sole carbon source. Can also catalyze the reverse oxidation reactions, albeit at a much lower rate. Is also able to use Delta(1)-pyrroline-(4S)-hydroxy-2-carboxylate (Pyr4SH2C) and cis-4-hydroxy-L-proline (c4LHyp) as substrates, and might be involved in the metabolism of c4LHyp, a compound which is generated by the hydroxylation of free L-proline in bacteria. The polypeptide is Delta(1)-pyrroline-2-carboxylate/Delta(1)-piperideine-2-carboxylate reductase (Pseudomonas aeruginosa (strain ATCC 15692 / DSM 22644 / CIP 104116 / JCM 14847 / LMG 12228 / 1C / PRS 101 / PAO1)).